A 404-amino-acid chain; its full sequence is RNA exonuclease 3 (404 aa).

In terms of domain architecture, Exonuclease spans 243–389 (VLSLDCEMAF…QDAIATMDVV (147 aa)).

This sequence belongs to the REXO1/REXO3 family.

It is found in the cytoplasm. The protein resides in the nucleus. 3' to 5' exoribonuclease required for proper 3' end maturation of MRP RNA and of the U5L snRNA. This Saccharomyces cerevisiae (strain ATCC 204508 / S288c) (Baker's yeast) protein is RNA exonuclease 3 (REX3).